We begin with the raw amino-acid sequence, 217 residues long: Ribulose-phosphate 3-epimerase (217 aa).

Position 6 (Ser-6) interacts with substrate. The a divalent metal cation site is built by His-29, Asp-31, and His-62. Asp-31 functions as the Proton acceptor in the catalytic mechanism. Residues His-62, 138 to 141 (GFGG), 171 to 173 (DGG), and 193 to 194 (GS) each bind substrate. Asp-171 provides a ligand contact to a divalent metal cation. The Proton donor role is filled by Asp-171.

It belongs to the ribulose-phosphate 3-epimerase family. A divalent metal cation is required as a cofactor.

It carries out the reaction D-ribulose 5-phosphate = D-xylulose 5-phosphate. It functions in the pathway carbohydrate degradation. Its function is as follows. Catalyzes the reversible epimerization of D-ribulose 5-phosphate to D-xylulose 5-phosphate. The polypeptide is Ribulose-phosphate 3-epimerase (Helicobacter pylori (strain J99 / ATCC 700824) (Campylobacter pylori J99)).